Consider the following 341-residue polypeptide: Protein pelota homolog (341 aa).

Belongs to the eukaryotic release factor 1 family. Pelota subfamily. As to quaternary structure, monomer. A divalent metal cation is required as a cofactor.

The protein resides in the cytoplasm. Functionally, may function in recognizing stalled ribosomes, interact with stem-loop structures in stalled mRNA molecules, and effect endonucleolytic cleavage of the mRNA. May play a role in the release non-functional ribosomes and degradation of damaged mRNAs. Has endoribonuclease activity. This is Protein pelota homolog from Sulfurisphaera tokodaii (strain DSM 16993 / JCM 10545 / NBRC 100140 / 7) (Sulfolobus tokodaii).